Consider the following 749-residue polypeptide: Subtilisin-like protease SBT4.14 (749 aa).

Residues 1–28 (MIRSKCSCHHHLLVLVMVVLWISPRYAS) form the signal peptide. Positions 29 to 115 (AEDEHAKDFY…VSRNQYRKLH (87 aa)) are cleaved as a propeptide — activation peptide. Residues 38–115 (YIIYLGDRPD…VSRNQYRKLH (78 aa)) form the Inhibitor I9 domain. The region spanning 119 to 595 (SWDFVGLPLT…GGQINPRRAA (477 aa)) is the Peptidase S8 domain. The Charge relay system role is filled by D145. N-linked (GlcNAc...) asparagine glycosylation occurs at N176. H210 functions as the Charge relay system in the catalytic mechanism. N-linked (GlcNAc...) asparagine glycans are attached at residues N225, N233, N446, and N458. Catalysis depends on S536, which acts as the Charge relay system. A glycan (N-linked (GlcNAc...) asparagine) is linked at N618.

This sequence belongs to the peptidase S8 family. Post-translationally, the C-terminal propeptide is autocleaved. In terms of tissue distribution, expressed only in roots, particularly in xylem.

In Arabidopsis thaliana (Mouse-ear cress), this protein is Subtilisin-like protease SBT4.14.